The sequence spans 196 residues: CASP-like protein 2U1 (196 aa).

Over 1-11 (MAPMECVRRRN) the chain is Cytoplasmic. A helical transmembrane segment spans residues 12–32 (VGELVLRCAATLVCMLSLMLL). Residues 33–58 (VRDQQIAVQEVGVTSVTTQLRYSSST) lie on the Extracellular side of the membrane. Residues 59-79 (GLVYLVYANGLVALYCFVVVL) traverse the membrane as a helical segment. At 80–95 (TSSFNGGSVMRRNKSG) the chain is on the cytoplasmic side. The chain crosses the membrane as a helical span at residues 96–116 (AWALFVLDQVLACILLSAASA). Topologically, residues 117–148 (ASEIAFLVEKGAKKTIWDSKCIVYGHFCRMLE) are extracellular. Residues 149-169 (VSIATSFIAVIMLGSICVLSA) traverse the membrane as a helical segment. Residues 170-196 (KQLFQQYTHYARIVNMVKLKSTPNSLL) are Cytoplasmic-facing.

The protein belongs to the Casparian strip membrane proteins (CASP) family. Homodimer and heterodimers.

The protein resides in the cell membrane. The polypeptide is CASP-like protein 2U1 (Pteridium aquilinum subsp. aquilinum (Bracken fern)).